Here is a 117-residue protein sequence, read N- to C-terminus: Ribonuclease P protein component (117 aa).

This sequence belongs to the RnpA family. Consists of a catalytic RNA component (M1 or rnpB) and a protein subunit.

It carries out the reaction Endonucleolytic cleavage of RNA, removing 5'-extranucleotides from tRNA precursor.. Its function is as follows. RNaseP catalyzes the removal of the 5'-leader sequence from pre-tRNA to produce the mature 5'-terminus. It can also cleave other RNA substrates such as 4.5S RNA. The protein component plays an auxiliary but essential role in vivo by binding to the 5'-leader sequence and broadening the substrate specificity of the ribozyme. The chain is Ribonuclease P protein component from Aliivibrio fischeri (strain ATCC 700601 / ES114) (Vibrio fischeri).